A 1404-amino-acid polypeptide reads, in one-letter code: DNA-directed RNA polymerase subunit beta' (1404 aa).

Zn(2+) is bound by residues Cys-70, Cys-72, Cys-85, and Cys-88. Residues Asp-460, Asp-462, and Asp-464 each contribute to the Mg(2+) site. Zn(2+) is bound by residues Cys-814, Cys-888, Cys-895, and Cys-898.

The protein belongs to the RNA polymerase beta' chain family. The RNAP catalytic core consists of 2 alpha, 1 beta, 1 beta' and 1 omega subunit. When a sigma factor is associated with the core the holoenzyme is formed, which can initiate transcription. Requires Mg(2+) as cofactor. Zn(2+) serves as cofactor.

It catalyses the reaction RNA(n) + a ribonucleoside 5'-triphosphate = RNA(n+1) + diphosphate. Functionally, DNA-dependent RNA polymerase catalyzes the transcription of DNA into RNA using the four ribonucleoside triphosphates as substrates. This Shewanella amazonensis (strain ATCC BAA-1098 / SB2B) protein is DNA-directed RNA polymerase subunit beta'.